Here is a 575-residue protein sequence, read N- to C-terminus: Flagellin A (575 aa).

Tandem repeats lie at residues 405-409 (GSGFS), 411-415 (GSGFS), and 447-450 (GSGF).

The protein belongs to the bacterial flagellin family. Heteromer of flaA and flaB.

The protein localises to the secreted. It localises to the bacterial flagellum. Its function is as follows. Flagellin is the subunit protein which polymerizes to form the filaments of bacterial flagella. In Campylobacter jejuni, this protein is Flagellin A (flaA).